The chain runs to 158 residues: 6,7-dimethyl-8-ribityllumazine synthase (158 aa).

5-amino-6-(D-ribitylamino)uracil contacts are provided by residues F23, 57–59, and 81–83; these read AFE and TVI. Residue 86 to 87 participates in (2S)-2-hydroxy-3-oxobutyl phosphate binding; that stretch reads GT. H89 acts as the Proton donor in catalysis. Position 114 (F114) interacts with 5-amino-6-(D-ribitylamino)uracil. (2S)-2-hydroxy-3-oxobutyl phosphate is bound at residue R128.

This sequence belongs to the DMRL synthase family.

It catalyses the reaction (2S)-2-hydroxy-3-oxobutyl phosphate + 5-amino-6-(D-ribitylamino)uracil = 6,7-dimethyl-8-(1-D-ribityl)lumazine + phosphate + 2 H2O + H(+). It participates in cofactor biosynthesis; riboflavin biosynthesis; riboflavin from 2-hydroxy-3-oxobutyl phosphate and 5-amino-6-(D-ribitylamino)uracil: step 1/2. Catalyzes the formation of 6,7-dimethyl-8-ribityllumazine by condensation of 5-amino-6-(D-ribitylamino)uracil with 3,4-dihydroxy-2-butanone 4-phosphate. This is the penultimate step in the biosynthesis of riboflavin. This Desulforudis audaxviator (strain MP104C) protein is 6,7-dimethyl-8-ribityllumazine synthase.